Consider the following 180-residue polypeptide: Acireductone dioxygenase (180 aa).

Fe(2+) is bound by residues H88, H90, E94, and H133. Ni(2+)-binding residues include H88, H90, E94, and H133.

It belongs to the acireductone dioxygenase (ARD) family. Monomer. Interacts with MMP14. Requires Fe(2+) as cofactor. The cofactor is Ni(2+).

The protein localises to the cytoplasm. Its subcellular location is the nucleus. It is found in the cell membrane. It carries out the reaction 1,2-dihydroxy-5-(methylsulfanyl)pent-1-en-3-one + O2 = 4-methylsulfanyl-2-oxobutanoate + formate + 2 H(+). It catalyses the reaction 1,2-dihydroxy-5-(methylsulfanyl)pent-1-en-3-one + O2 = 3-(methylsulfanyl)propanoate + CO + formate + 2 H(+). The protein operates within amino-acid biosynthesis; L-methionine biosynthesis via salvage pathway; L-methionine from S-methyl-5-thio-alpha-D-ribose 1-phosphate: step 5/6. Catalyzes 2 different reactions between oxygen and the acireductone 1,2-dihydroxy-3-keto-5-methylthiopentene (DHK-MTPene) depending upon the metal bound in the active site. Fe-containing acireductone dioxygenase (Fe-ARD) produces formate and 2-keto-4-methylthiobutyrate (KMTB), the alpha-ketoacid precursor of methionine in the methionine recycle pathway. Ni-containing acireductone dioxygenase (Ni-ARD) produces methylthiopropionate, carbon monoxide and formate, and does not lie on the methionine recycle pathway. This is Acireductone dioxygenase from Gallus gallus (Chicken).